The chain runs to 308 residues: D-alanine--D-alanine ligase (308 aa).

An ATP-grasp domain is found at 103 to 302 (KTVMKTAGVP…FDELVQWMVE (200 aa)). An ATP-binding site is contributed by 130-184 (MEPPYVIKPVADGSSVGVYIITEQHQHPPQELFRDDWAYGDKLLVEKYVAGKELT). Residues D252, E269, and N271 each coordinate Mg(2+).

It belongs to the D-alanine--D-alanine ligase family. Mg(2+) serves as cofactor. The cofactor is Mn(2+).

The protein resides in the cytoplasm. The catalysed reaction is 2 D-alanine + ATP = D-alanyl-D-alanine + ADP + phosphate + H(+). Its pathway is cell wall biogenesis; peptidoglycan biosynthesis. Cell wall formation. The protein is D-alanine--D-alanine ligase of Rhodopseudomonas palustris (strain BisA53).